The chain runs to 292 residues: Pantothenate synthetase (292 aa).

30 to 37 (MGALHEGH) lines the ATP pocket. His-37 (proton donor) is an active-site residue. Gln-61 contacts (R)-pantoate. Gln-61 is a beta-alanine binding site. An ATP-binding site is contributed by 147–150 (GEKD). Gln-153 is a (R)-pantoate binding site. 184–187 (VSSR) lines the ATP pocket.

The protein belongs to the pantothenate synthetase family. In terms of assembly, homodimer.

The protein localises to the cytoplasm. It catalyses the reaction (R)-pantoate + beta-alanine + ATP = (R)-pantothenate + AMP + diphosphate + H(+). The protein operates within cofactor biosynthesis; (R)-pantothenate biosynthesis; (R)-pantothenate from (R)-pantoate and beta-alanine: step 1/1. In terms of biological role, catalyzes the condensation of pantoate with beta-alanine in an ATP-dependent reaction via a pantoyl-adenylate intermediate. The chain is Pantothenate synthetase from Chlorobium phaeovibrioides (strain DSM 265 / 1930) (Prosthecochloris vibrioformis (strain DSM 265)).